Consider the following 962-residue polypeptide: Nonribosomal peptide synthetase atqA (962 aa).

The segment at Ala-34–Ile-462 is adenylation (A) domain. Residues Ser-595–Ser-672 form the Carrier domain. Ser-630 carries the O-(pantetheine 4'-phosphoryl)serine modification. Positions Pro-694–Lys-951 are thioesterase (TE) domain.

Belongs to the NRP synthetase family.

It participates in secondary metabolite biosynthesis. Functionally, nonribosomal peptide synthetase; part of the gene cluster that mediates the biosynthesis of asterriquinone CT5, a natural product that displays potential biological activities including antitumor and insulin mimic activities. The nonribosomal peptide synthetase atqA is responsible for the production of the benzoquinone derivative didemethylasterriquinone D (DDAQ D), via condensation of 2 indole pyruvic acid (IPA) molecules. The symmetric connectivity of the 2 IPA molecules is thought to arise by head-to-tail dual Claisen condensations catalyzed by the TE domain of atqA. DDAQ D represents the core structure of asterriquinones and is further modified by yet unidentified tailoring enzymes to lead to the production of asterriquinone CT5. This Aspergillus terreus (strain NIH 2624 / FGSC A1156) protein is Nonribosomal peptide synthetase atqA.